Reading from the N-terminus, the 530-residue chain is MSAKEKFASLSPAEFFKRNPELAGFPNPARALYQTVRELIENSLDATDVHGILPNIKITIDLIDESRQIYKVNVVDNGIGIPPQEVPNAFGRVLYSSKYVNRQTRGMYGLGVKAAVLYSQMHQDKPIEIETSPVNSKRLYTFKLKIDINKNEPIIVERGSVENNTGFHGTSVAISIPGDWPKAKSRIYEYIKRTYIITPYAEFIFKDPEGNVTYYPRLTNKIPKPPQEVKPHPYGVDREEIKIMINNLKRDYTIKEFLMSEFQSIGDTTADKILELVGLRPNKKVKNLTEEEITRLVETFKKYEDFRSPSADSLSVIGEDLIELGLKKIFNPDFTASITRKPKAYQGHPFIVEAGIAFGGSIPVGEEPIVLRYANKIPLIYDEKSDVIWKVVEELDWKRYGIESDQYQMVVMVHLCSTKIPYKSAGKESIAEVEDIEKEIKNALMEVARKLKLYLSEKRKEQEAKKKLLAYLKYVPEVSRSLAIFLASGNKELVPKYQGEIVEGLFKLISKKLDLINIEEYRKVYKVDSE.

ATP contacts are provided by residues Asn42, Asp76, 97 to 98 (SK), 106 to 113 (GMYGLGVK), and Lys427.

Belongs to the TOP6B family. In terms of assembly, homodimer. Heterotetramer of two Top6A and two Top6B chains.

It catalyses the reaction ATP-dependent breakage, passage and rejoining of double-stranded DNA.. Relaxes both positive and negative superturns and exhibits a strong decatenase activity. The chain is Type 2 DNA topoisomerase 6 subunit B from Saccharolobus solfataricus (strain ATCC 35092 / DSM 1617 / JCM 11322 / P2) (Sulfolobus solfataricus).